A 506-amino-acid chain; its full sequence is SPbeta prophage-derived uncharacterized protein YonE (506 aa).

A disordered region spans residues 473 to 506 (YTFTGNEVGRPNEGNKNNDNTVKSATSNGNDNPI). Residues 486–506 (GNKNNDNTVKSATSNGNDNPI) are compositionally biased toward polar residues.

The polypeptide is SPbeta prophage-derived uncharacterized protein YonE (yonE) (Bacillus subtilis (strain 168)).